The primary structure comprises 219 residues: 3-dehydroquinate dehydratase (219 aa).

3-dehydroquinate is bound by residues 28 to 30 (ELR) and Arg61. Residue His116 is the Proton donor/acceptor of the active site. The Schiff-base intermediate with substrate role is filled by Lys142. Positions 180 and 203 each coordinate 3-dehydroquinate.

It belongs to the type-I 3-dehydroquinase family. Homodimer.

The enzyme catalyses 3-dehydroquinate = 3-dehydroshikimate + H2O. Its pathway is metabolic intermediate biosynthesis; chorismate biosynthesis; chorismate from D-erythrose 4-phosphate and phosphoenolpyruvate: step 3/7. Its function is as follows. Involved in the third step of the chorismate pathway, which leads to the biosynthesis of aromatic amino acids. Catalyzes the cis-dehydration of 3-dehydroquinate (DHQ) and introduces the first double bond of the aromatic ring to yield 3-dehydroshikimate. The protein is 3-dehydroquinate dehydratase of Aquifex aeolicus (strain VF5).